We begin with the raw amino-acid sequence, 707 residues long: Tubulin polyglutamylase ttll-11 (707 aa).

One can recognise a TTL domain in the interval 124-488; it reads RFTIDTSRAK…PLVRDTLLLV (365 aa). ATP contacts are provided by residues 279-282, Lys-293, and Asp-295; that span reads QEYV. A disordered region spans residues 675 to 707; sequence RNRSGTNGRKQNFTDDNNNPNSFAHLPKINERL. The segment covering 677 to 696 has biased composition (polar residues); the sequence is RSGTNGRKQNFTDDNNNPNS.

It belongs to the tubulin--tyrosine ligase family. Expressed in amphid sensory neurons. Weakly expressed in body wall muscles. Isoform a: Specifically expressed in ciliated sensory neurons in the head, including the IL1s, OLQ, head CEP, and amphid neurons. In the male tail, expressed in HOA, RnA, and phasmid neurons. Isoform b: Specifically expressed in male and hermaphrodite IL2 ciliated sensory neurons, and in male-specific CEM, HOB and RnB ciliated sensory neurons.

The protein localises to the cell projection. It is found in the axon. It localises to the perikaryon. The protein resides in the dendrite. Its subcellular location is the cilium. The protein localises to the extracellular vesicle. It carries out the reaction L-glutamyl-[protein] + L-glutamate + ATP = gamma-L-glutamyl-L-glutamyl-[protein] + ADP + phosphate + H(+). Polyglutamylase which preferentially modifies tubulin. Involved in the side-chain initiation step of the polyglutamylation reaction. By controlling tubulin glutamylation, regulates ciliary specialization and motor-based transport. Promotes the formation of A and B tubule singlets by splaying microtubule doublets in cilia. Together with ttll-4 and 5, required for male mating. Its function is as follows. Specifically promotes tubulin glutamylation in a subset of ciliated neurons including amphid, phasmid, CEP and RnA neurons. Functionally, specifically promotes tubulin glutamylation in male ciliated CEM, HOB and RnB neurons that release bioactive extracellular vesicles. Regulates the localization of TRP channel pdk-2 in male CEM, HOB and RnB neurons. Regulates the environmental release of bioactive extracellular vesicles in cilia. The chain is Tubulin polyglutamylase ttll-11 from Caenorhabditis elegans.